We begin with the raw amino-acid sequence, 498 residues long: tRNA-2-methylthio-N(6)-dimethylallyladenosine synthase (498 aa).

Residues 2–118 (PRYSITTFGC…LPGLLGDLAI (117 aa)) enclose the MTTase N-terminal domain. [4Fe-4S] cluster is bound by residues Cys-11, Cys-47, Cys-81, Cys-163, Cys-167, and Cys-170. The 245-residue stretch at 149–393 (PRAAPTAFVT…FEESEALLAA (245 aa)) folds into the Radical SAM core domain. One can recognise a TRAM domain in the interval 396–467 (SALVGTTQEV…KHSLQAELTE (72 aa)). The segment at 469–498 (ARAAARPRQRGGLEPRPARRSLPVVAAEGG) is disordered.

Belongs to the methylthiotransferase family. MiaB subfamily. As to quaternary structure, monomer. The cofactor is [4Fe-4S] cluster.

The protein localises to the cytoplasm. The enzyme catalyses N(6)-dimethylallyladenosine(37) in tRNA + (sulfur carrier)-SH + AH2 + 2 S-adenosyl-L-methionine = 2-methylsulfanyl-N(6)-dimethylallyladenosine(37) in tRNA + (sulfur carrier)-H + 5'-deoxyadenosine + L-methionine + A + S-adenosyl-L-homocysteine + 2 H(+). Functionally, catalyzes the methylthiolation of N6-(dimethylallyl)adenosine (i(6)A), leading to the formation of 2-methylthio-N6-(dimethylallyl)adenosine (ms(2)i(6)A) at position 37 in tRNAs that read codons beginning with uridine. This Sorangium cellulosum (strain So ce56) (Polyangium cellulosum (strain So ce56)) protein is tRNA-2-methylthio-N(6)-dimethylallyladenosine synthase.